A 214-amino-acid chain; its full sequence is Pyridoxine/pyridoxamine 5'-phosphate oxidase (214 aa).

Substrate contacts are provided by residues arginine 9–tyrosine 12 and lysine 67. Residues arginine 62–lysine 67, tyrosine 77–serine 78, arginine 83, lysine 84, and glutamine 106 each bind FMN. Residues tyrosine 124, arginine 128, and serine 132 each contribute to the substrate site. FMN is bound by residues glutamine 141 to serine 142 and tryptophan 186. Arginine 192 to histidine 194 serves as a coordination point for substrate. Arginine 196 lines the FMN pocket.

Belongs to the pyridoxamine 5'-phosphate oxidase family. As to quaternary structure, homodimer. It depends on FMN as a cofactor.

The enzyme catalyses pyridoxamine 5'-phosphate + O2 + H2O = pyridoxal 5'-phosphate + H2O2 + NH4(+). It catalyses the reaction pyridoxine 5'-phosphate + O2 = pyridoxal 5'-phosphate + H2O2. The protein operates within cofactor metabolism; pyridoxal 5'-phosphate salvage; pyridoxal 5'-phosphate from pyridoxamine 5'-phosphate: step 1/1. Its pathway is cofactor metabolism; pyridoxal 5'-phosphate salvage; pyridoxal 5'-phosphate from pyridoxine 5'-phosphate: step 1/1. In terms of biological role, catalyzes the oxidation of either pyridoxine 5'-phosphate (PNP) or pyridoxamine 5'-phosphate (PMP) into pyridoxal 5'-phosphate (PLP). This Porphyromonas gingivalis (strain ATCC 33277 / DSM 20709 / CIP 103683 / JCM 12257 / NCTC 11834 / 2561) protein is Pyridoxine/pyridoxamine 5'-phosphate oxidase.